A 248-amino-acid polypeptide reads, in one-letter code: Pulmonary surfactant-associated protein A (248 aa).

The first 20 residues, 1 to 20 (MWLCPLALTLTLMAASGAAC), serve as a signal peptide directing secretion. Residues 31–100 (GIPGTPGSHG…PGERGPPGLP (70 aa)) form the Collagen-like domain. The disordered stretch occupies residues 33–100 (PGTPGSHGLP…PGERGPPGLP (68 aa)). Basic and acidic residues predominate over residues 42–51 (PGRDGRDGVK). Residues 54-65 (PGPPGPMGPPGD) show a composition bias toward pro residues. The region spanning 134-247 (IGGKVFSTNG…CLYNRLTICE (114 aa)) is the C-type lectin domain. Cystine bridges form between Cys155/Cys246 and Cys224/Cys238. Asn207 is a glycosylation site (N-linked (GlcNAc...) asparagine). 4 residues coordinate Ca(2+): Glu215, Ala217, Asn234, and Asp235.

This sequence belongs to the SFTPA family. As to quaternary structure, oligomeric complex of 6 set of homotrimers.

It is found in the secreted. The protein localises to the extracellular space. Its subcellular location is the extracellular matrix. The protein resides in the surface film. In terms of biological role, in presence of calcium ions, it binds to surfactant phospholipids and contributes to lower the surface tension at the air-liquid interface in the alveoli of the mammalian lung and is essential for normal respiration. Enhances the expression of MYO18A/SP-R210 on alveolar macrophages. The sequence is that of Pulmonary surfactant-associated protein A (SFTPA1) from Macaca mulatta (Rhesus macaque).